The following is a 129-amino-acid chain: uncharacterized protein (129 aa).

The span at 85 to 108 (SSAADSDDSSSCSECDSDALLSDD) shows a compositional bias: low complexity. Residues 85-110 (SSAADSDDSSSCSECDSDALLSDDGP) are disordered.

This is an uncharacterized protein from Microplitis demolitor (Parasitoid wasp).